The chain runs to 379 residues: Inactive deoxyhypusine synthase (379 aa).

Residues 1 to 48 are disordered; sequence MLASVPAPRPAKKDSAASRRKSASKSTGAAVKDGSSARVSASGAAESP. The span at 36–47 shows a compositional bias: low complexity; the sequence is SARVSASGAAES. NAD(+) is bound by residues 115 to 119, 141 to 143, E147, and D256; these read SNMIS and SAG. Position 146–147 (146–147) interacts with spermidine; that stretch reads EE. D261 lines the spermidine pocket. NAD(+) is bound at residue G302. H307 provides a ligand contact to spermidine. NAD(+) is bound at residue 323–324; sequence TG. Residues 329–331 and 338–344 each bind spermidine; these read GCV and DDVACGL. Position 357–358 (357–358) interacts with NAD(+); that stretch reads DA.

Belongs to the deoxyhypusine synthase family.

The sequence is that of Inactive deoxyhypusine synthase from Leishmania donovani.